A 462-amino-acid chain; its full sequence is Signal recognition particle protein (462 aa).

GTP is bound by residues 107–114 (GLQGAGKT), 190–194 (DTAGR), and 248–251 (TKVD).

It belongs to the GTP-binding SRP family. SRP54 subfamily. Part of the signal recognition particle protein translocation system, which is composed of SRP and FtsY. SRP is a ribonucleoprotein composed of Ffh and a 4.5S RNA molecule.

It localises to the cytoplasm. It carries out the reaction GTP + H2O = GDP + phosphate + H(+). Functionally, involved in targeting and insertion of nascent membrane proteins into the cytoplasmic membrane. Binds to the hydrophobic signal sequence of the ribosome-nascent chain (RNC) as it emerges from the ribosomes. The SRP-RNC complex is then targeted to the cytoplasmic membrane where it interacts with the SRP receptor FtsY. Interaction with FtsY leads to the transfer of the RNC complex to the Sec translocase for insertion into the membrane, the hydrolysis of GTP by both Ffh and FtsY, and the dissociation of the SRP-FtsY complex into the individual components. The protein is Signal recognition particle protein of Haemophilus influenzae (strain ATCC 51907 / DSM 11121 / KW20 / Rd).